A 163-amino-acid chain; its full sequence is Transcription elongation factor GreA (163 aa).

Residues 49-80 (ENAEYDAARDRQSEVERRILELERILENAEII) adopt a coiled-coil conformation.

The protein belongs to the GreA/GreB family.

Functionally, necessary for efficient RNA polymerase transcription elongation past template-encoded arresting sites. The arresting sites in DNA have the property of trapping a certain fraction of elongating RNA polymerases that pass through, resulting in locked ternary complexes. Cleavage of the nascent transcript by cleavage factors such as GreA or GreB allows the resumption of elongation from the new 3'terminus. GreA releases sequences of 2 to 3 nucleotides. This Mycoplasmopsis agalactiae (strain NCTC 10123 / CIP 59.7 / PG2) (Mycoplasma agalactiae) protein is Transcription elongation factor GreA.